Here is a 139-residue protein sequence, read N- to C-terminus: Putative nickel-responsive regulator (139 aa).

Residues H79, H90, H92, and C98 each coordinate Ni(2+).

Belongs to the transcriptional regulatory CopG/NikR family. Ni(2+) serves as cofactor.

Its function is as follows. Transcriptional regulator. The protein is Putative nickel-responsive regulator of Trichlorobacter lovleyi (strain ATCC BAA-1151 / DSM 17278 / SZ) (Geobacter lovleyi).